A 246-amino-acid polypeptide reads, in one-letter code: Protein phosphatase PhpP (246 aa).

Positions 2–240 (EISLLTDVGQ…DNITVALVSM (239 aa)) constitute a PPM-type phosphatase domain. Asp-36, Gly-37, Asp-192, and Asp-231 together coordinate Mn(2+).

The protein belongs to the PP2C family. Mn(2+) is required as a cofactor.

It localises to the cytoplasm. It carries out the reaction O-phospho-L-seryl-[protein] + H2O = L-seryl-[protein] + phosphate. The catalysed reaction is O-phospho-L-threonyl-[protein] + H2O = L-threonyl-[protein] + phosphate. In terms of biological role, protein phosphatase able to dephosphorylate StkP-P and other phosphorylated protein substrates. PhpP and its cognate protein kinase StkP appear to constitute a functional signaling couple in vivo, PhpP's primary role being probably to control phosphorylation levels of StkP and of its targets. PhpP thus performs an essential control of StkP activity. Also dephosphorylates DivIVA in vivo. This is Protein phosphatase PhpP (phpP) from Streptococcus pneumoniae serotype 2 (strain D39 / NCTC 7466).